Consider the following 474-residue polypeptide: MAGKTLYSKLWDIHEVARRDDGSSLIYIDRHILHEVTSPQAFEGLRLAGRPLWRVNANIATPDHNVPTTKAERQGSLLSIADTVSRLQVQTLDENCDDFGIFEFKMNDVRQGIVHVIGPEQGATLPGMTVVCGDSHTSTHGAFGALAHGIGTSEVEHVLATQCLVTQKMKNMQVRVEGTLPWGVTAKDIVLALIGKIGTAGGNGYAVEFSGSTIRALSMEGRMTICNMAIEAGARVGMVAVDEKTIQYVHGRPFAPKGSDWDAAVAFWRGLVSDPDAHFDRVVELSAEEIKPQVTWGTSPEMVSAVDQSVPDPERETDPVKKESLIRALKYMGLQPNDPITSIKLDRVFIGSCTNSRIEDLRAAAEVVKGRKVASTVKQAMVVPGSGLVKAQAEVEGLDKIFIEAGFEWREPGCSMCLAMNPDKLGSGEHCASTSNRNFEGRQGIGGRTHLVSPAMAAAAAVAGHFVDVREMMR.

3 residues coordinate [4Fe-4S] cluster: Cys353, Cys414, and Cys417.

The protein belongs to the aconitase/IPM isomerase family. LeuC type 1 subfamily. In terms of assembly, heterodimer of LeuC and LeuD. [4Fe-4S] cluster is required as a cofactor.

It carries out the reaction (2R,3S)-3-isopropylmalate = (2S)-2-isopropylmalate. It participates in amino-acid biosynthesis; L-leucine biosynthesis; L-leucine from 3-methyl-2-oxobutanoate: step 2/4. Its function is as follows. Catalyzes the isomerization between 2-isopropylmalate and 3-isopropylmalate, via the formation of 2-isopropylmaleate. The chain is 3-isopropylmalate dehydratase large subunit from Xylella fastidiosa (strain 9a5c).